A 726-amino-acid polypeptide reads, in one-letter code: Eukaryotic translation initiation factor 3 subunit B (726 aa).

Residues 1-94 form a sufficient for interaction with HCR1 and TIF32 region; the sequence is MSAALEDIKL…LFVECASPAD (94 aa). A sufficient for interaction with PIC8 region spans residues 1 to 219; it reads MSAALEDIKL…GVVMWGGPHF (219 aa). Residues 37–120 enclose the RRM domain; that stretch reads QYIVVCGAPV…HRLFIYTMRD (84 aa). 7 WD repeats span residues 142–182, 186–224, 235–283, 331–374, 442–485, 505–549, and 566–611; these read FPTS…EESV, RKNWSTNYIRFSPKGTYLFSYHPQGVVMWGGPHFDRLRR, VSPS…LQST, LKVP…MSCK, ELKD…FAPE, ITDK…TDKN, and NSFP…VKEE.

Belongs to the eIF-3 subunit B family. Component of the eukaryotic translation initiation factor 3 (eIF-3) complex.

The protein localises to the cytoplasm. Functionally, RNA-binding component of the eukaryotic translation initiation factor 3 (eIF-3) complex, which is involved in protein synthesis of a specialized repertoire of mRNAs and, together with other initiation factors, stimulates binding of mRNA and methionyl-tRNAi to the 40S ribosome. The eIF-3 complex specifically targets and initiates translation of a subset of mRNAs involved in cell proliferation. This Vanderwaltozyma polyspora (strain ATCC 22028 / DSM 70294 / BCRC 21397 / CBS 2163 / NBRC 10782 / NRRL Y-8283 / UCD 57-17) (Kluyveromyces polysporus) protein is Eukaryotic translation initiation factor 3 subunit B.